We begin with the raw amino-acid sequence, 430 residues long: Asparagine--tRNA ligase (430 aa).

Belongs to the class-II aminoacyl-tRNA synthetase family. In terms of assembly, homodimer.

The protein localises to the cytoplasm. It catalyses the reaction tRNA(Asn) + L-asparagine + ATP = L-asparaginyl-tRNA(Asn) + AMP + diphosphate + H(+). This chain is Asparagine--tRNA ligase, found in Bacillus licheniformis (strain ATCC 14580 / DSM 13 / JCM 2505 / CCUG 7422 / NBRC 12200 / NCIMB 9375 / NCTC 10341 / NRRL NRS-1264 / Gibson 46).